Consider the following 312-residue polypeptide: 4-hydroxy-3-methylbut-2-enyl diphosphate reductase (312 aa).

[4Fe-4S] cluster is bound at residue Cys15. The (2E)-4-hydroxy-3-methylbut-2-enyl diphosphate site is built by His44 and His77. 2 residues coordinate dimethylallyl diphosphate: His44 and His77. Isopentenyl diphosphate contacts are provided by His44 and His77. Residue Cys99 coordinates [4Fe-4S] cluster. Position 127 (His127) interacts with (2E)-4-hydroxy-3-methylbut-2-enyl diphosphate. Dimethylallyl diphosphate is bound at residue His127. His127 contacts isopentenyl diphosphate. The active-site Proton donor is Glu129. Thr167 provides a ligand contact to (2E)-4-hydroxy-3-methylbut-2-enyl diphosphate. Position 197 (Cys197) interacts with [4Fe-4S] cluster. (2E)-4-hydroxy-3-methylbut-2-enyl diphosphate contacts are provided by Ser225, Ser226, Asn227, and Ser269. Residues Ser225, Ser226, Asn227, and Ser269 each contribute to the dimethylallyl diphosphate site. Residues Ser225, Ser226, Asn227, and Ser269 each contribute to the isopentenyl diphosphate site.

Belongs to the IspH family. [4Fe-4S] cluster is required as a cofactor.

The catalysed reaction is isopentenyl diphosphate + 2 oxidized [2Fe-2S]-[ferredoxin] + H2O = (2E)-4-hydroxy-3-methylbut-2-enyl diphosphate + 2 reduced [2Fe-2S]-[ferredoxin] + 2 H(+). It catalyses the reaction dimethylallyl diphosphate + 2 oxidized [2Fe-2S]-[ferredoxin] + H2O = (2E)-4-hydroxy-3-methylbut-2-enyl diphosphate + 2 reduced [2Fe-2S]-[ferredoxin] + 2 H(+). It participates in isoprenoid biosynthesis; dimethylallyl diphosphate biosynthesis; dimethylallyl diphosphate from (2E)-4-hydroxy-3-methylbutenyl diphosphate: step 1/1. It functions in the pathway isoprenoid biosynthesis; isopentenyl diphosphate biosynthesis via DXP pathway; isopentenyl diphosphate from 1-deoxy-D-xylulose 5-phosphate: step 6/6. In terms of biological role, catalyzes the conversion of 1-hydroxy-2-methyl-2-(E)-butenyl 4-diphosphate (HMBPP) into a mixture of isopentenyl diphosphate (IPP) and dimethylallyl diphosphate (DMAPP). Acts in the terminal step of the DOXP/MEP pathway for isoprenoid precursor biosynthesis. The chain is 4-hydroxy-3-methylbut-2-enyl diphosphate reductase from Aromatoleum aromaticum (strain DSM 19018 / LMG 30748 / EbN1) (Azoarcus sp. (strain EbN1)).